Consider the following 352-residue polypeptide: Ion-translocating oxidoreductase complex subunit D (352 aa).

4 helical membrane-spanning segments follow: residues 20 to 40, 42 to 62, 69 to 91, and 123 to 143; these read IMLL…WFFG, GTLF…AIVL, VASH…SIPP, and PAMI…TSWL. Threonine 187 is subject to FMN phosphoryl threonine. Helical transmembrane passes span 215–235, 242–262, 267–287, 301–321, and 322–342; these read LAGV…VFLL, WHIP…GWLF, LASP…FFIL, LIFG…GGYP, and DGVA…DYYT.

The protein belongs to the NqrB/RnfD family. As to quaternary structure, the complex is composed of six subunits: RsxA, RsxB, RsxC, RsxD, RsxE and RsxG. It depends on FMN as a cofactor.

It is found in the cell inner membrane. Part of a membrane-bound complex that couples electron transfer with translocation of ions across the membrane. Required to maintain the reduced state of SoxR. The chain is Ion-translocating oxidoreductase complex subunit D from Salmonella paratyphi A (strain ATCC 9150 / SARB42).